Reading from the N-terminus, the 554-residue chain is NADH-quinone oxidoreductase subunit N 3 (554 aa).

A run of 14 helical transmembrane segments spans residues 35 to 55 (LMPVLIIVVAAVLGILVEAFV), 65 to 85 (LFLTVVAVAGSFAAIVGLAAG), 105 to 125 (PTLFLQGTILLVAMVALFTFA), 161 to 181 (GFTTTEVFPLLLFSVAGLLVF), 187 to 207 (LLTLFIALEVFSLPLYLLCAV), 222 to 242 (YFLLGAFSSAFLLFGIALLYG), 275 to 295 (ALLLIGGAMILTGLLFKVGAV), 322 to 342 (VAAFGALLRLLYVALPGLAWD), 345 to 365 (PVMWAVAIVTMLGGAIVAITQ), 371 to 391 (LLAYSSIAHAGFILAGVIAAS), 398 to 418 (VLFYLLAYSFVTVGAFAVVTL), 442 to 462 (VAAVFAVFLLAFAGIPLTSGF), 476 to 496 (GAGALVVVGVLSSAVAAFFYI), and 525 to 545 (IAVGVAVTLVLGLAPQYFLDL).

Belongs to the complex I subunit 2 family. As to quaternary structure, NDH-1 is composed of 14 different subunits. Subunits NuoA, H, J, K, L, M, N constitute the membrane sector of the complex.

Its subcellular location is the cell membrane. It carries out the reaction a quinone + NADH + 5 H(+)(in) = a quinol + NAD(+) + 4 H(+)(out). In terms of biological role, NDH-1 shuttles electrons from NADH, via FMN and iron-sulfur (Fe-S) centers, to quinones in the respiratory chain. The immediate electron acceptor for the enzyme in this species is believed to be a menaquinone. Couples the redox reaction to proton translocation (for every two electrons transferred, four hydrogen ions are translocated across the cytoplasmic membrane), and thus conserves the redox energy in a proton gradient. This is NADH-quinone oxidoreductase subunit N 3 from Streptomyces griseus subsp. griseus (strain JCM 4626 / CBS 651.72 / NBRC 13350 / KCC S-0626 / ISP 5235).